The following is a 406-amino-acid chain: Lysophospholipid transporter LplT (406 aa).

11 consecutive transmembrane segments (helical) span residues 16 to 36 (MVAVLCAQFFSAFGDNALLFA), 53 to 73 (ILQMAFVATYIVLAPFVGQIA), 91 to 111 (AGALVICFGLNPFLGYSLVGV), 139 to 159 (MMEASTIAAILLGSVAGGILA), 164 to 184 (MAALGVCALVYAIAVIANLFI), 227 to 247 (LFWGAGVTLRFLLVLWVPVAL), 253 to 273 (ATPTLLNAMVAIGIVVGAGAA), 285 to 305 (CLPAGVLIGVMVTIFSLQNSM), 310 to 330 (LLLIIIGILGGFFVVPLNALL), 349 to 369 (LGENTAMLFMLGLYSLVVKLG), and 372 to 392 (VVAVGVGFGVVFALAIALLWG).

Belongs to the major facilitator superfamily. LplT (TC 2.A.1.42) family.

It is found in the cell inner membrane. Functionally, catalyzes the facilitated diffusion of 2-acyl-glycero-3-phosphoethanolamine (2-acyl-GPE) into the cell. The polypeptide is Lysophospholipid transporter LplT (Yersinia pestis bv. Antiqua (strain Antiqua)).